Reading from the N-terminus, the 550-residue chain is Arginine--tRNA ligase (550 aa).

The short motif at 130 to 140 is the 'HIGH' region element; the sequence is ANPTGPIHIGG.

It belongs to the class-I aminoacyl-tRNA synthetase family. In terms of assembly, monomer.

The protein resides in the cytoplasm. The enzyme catalyses tRNA(Arg) + L-arginine + ATP = L-arginyl-tRNA(Arg) + AMP + diphosphate. The sequence is that of Arginine--tRNA ligase from Mycolicibacterium paratuberculosis (strain ATCC BAA-968 / K-10) (Mycobacterium paratuberculosis).